A 150-amino-acid chain; its full sequence is Small ribosomal subunit protein eS19 (150 aa).

This sequence belongs to the eukaryotic ribosomal protein eS19 family. As to quaternary structure, part of the 30S ribosomal subunit.

May be involved in maturation of the 30S ribosomal subunit. In Pyrococcus horikoshii (strain ATCC 700860 / DSM 12428 / JCM 9974 / NBRC 100139 / OT-3), this protein is Small ribosomal subunit protein eS19.